Here is a 226-residue protein sequence, read N- to C-terminus: Ribosomal RNA large subunit methyltransferase E (226 aa).

Residues glycine 82, tryptophan 84, aspartate 100, aspartate 116, and aspartate 140 each coordinate S-adenosyl-L-methionine. The active-site Proton acceptor is lysine 180.

This sequence belongs to the class I-like SAM-binding methyltransferase superfamily. RNA methyltransferase RlmE family.

It is found in the cytoplasm. It carries out the reaction uridine(2552) in 23S rRNA + S-adenosyl-L-methionine = 2'-O-methyluridine(2552) in 23S rRNA + S-adenosyl-L-homocysteine + H(+). In terms of biological role, specifically methylates the uridine in position 2552 of 23S rRNA at the 2'-O position of the ribose in the fully assembled 50S ribosomal subunit. The sequence is that of Ribosomal RNA large subunit methyltransferase E from Caulobacter sp. (strain K31).